The primary structure comprises 349 residues: NADH-quinone oxidoreductase subunit H (349 aa).

A run of 8 helical transmembrane segments spans residues 11 to 31 (FPLL…LLLV), 83 to 103 (GVFL…WAVI), 116 to 136 (VGLL…IMGG), 162 to 182 (IGFV…TTIV), 200 to 220 (FLDW…ISAL), 252 to 272 (LFFL…TILF), 288 to 308 (VPGI…FAMV), and 323 to 343 (LGWK…AAFL).

This sequence belongs to the complex I subunit 1 family. NDH-1 is composed of 14 different subunits. Subunits NuoA, H, J, K, L, M, N constitute the membrane sector of the complex.

The protein localises to the cell inner membrane. The enzyme catalyses a quinone + NADH + 5 H(+)(in) = a quinol + NAD(+) + 4 H(+)(out). In terms of biological role, NDH-1 shuttles electrons from NADH, via FMN and iron-sulfur (Fe-S) centers, to quinones in the respiratory chain. The immediate electron acceptor for the enzyme in this species is believed to be ubiquinone. Couples the redox reaction to proton translocation (for every two electrons transferred, four hydrogen ions are translocated across the cytoplasmic membrane), and thus conserves the redox energy in a proton gradient. This subunit may bind ubiquinone. This is NADH-quinone oxidoreductase subunit H from Bartonella henselae (strain ATCC 49882 / DSM 28221 / CCUG 30454 / Houston 1) (Rochalimaea henselae).